We begin with the raw amino-acid sequence, 264 residues long: MKQYLDFMRHVYEHGTEKSDRTGTGTRSVFGYQMRFDLNEGFPVVTTKKLHLKSIIHELLWFLQGSTNIKYLKDNGVTIWDEWADANGELGPIYGYQWRAWPTPDGRHIDQITEVVQQIRDNPDSRRLIVSAWNVGEIPQMKLPPCHAFFQFYVADGKLSCQLYQRSADIFLGVPFNIASYALLTHMIAQQCDLGVGDFVWTGGDCHIYSNHFEQVETQLSREPMKLPTLRIKHRPDSIFDYKYDDFELVGYESHPAIKAPVAV.

Residue R21 participates in dUMP binding. Residue H51 coordinates (6R)-5,10-methylene-5,6,7,8-tetrahydrofolate. 126-127 is a dUMP binding site; the sequence is RR. The active-site Nucleophile is C146. Residues 166–169, N177, and 207–209 contribute to the dUMP site; these read RSAD and HIY. A (6R)-5,10-methylene-5,6,7,8-tetrahydrofolate-binding site is contributed by D169. (6R)-5,10-methylene-5,6,7,8-tetrahydrofolate is bound at residue A263.

This sequence belongs to the thymidylate synthase family. Bacterial-type ThyA subfamily. In terms of assembly, homodimer.

The protein resides in the cytoplasm. The catalysed reaction is dUMP + (6R)-5,10-methylene-5,6,7,8-tetrahydrofolate = 7,8-dihydrofolate + dTMP. It functions in the pathway pyrimidine metabolism; dTTP biosynthesis. Catalyzes the reductive methylation of 2'-deoxyuridine-5'-monophosphate (dUMP) to 2'-deoxythymidine-5'-monophosphate (dTMP) while utilizing 5,10-methylenetetrahydrofolate (mTHF) as the methyl donor and reductant in the reaction, yielding dihydrofolate (DHF) as a by-product. This enzymatic reaction provides an intracellular de novo source of dTMP, an essential precursor for DNA biosynthesis. The polypeptide is Thymidylate synthase (Cupriavidus metallidurans (strain ATCC 43123 / DSM 2839 / NBRC 102507 / CH34) (Ralstonia metallidurans)).